The chain runs to 214 residues: ATP phosphoribosyltransferase (214 aa).

This sequence belongs to the ATP phosphoribosyltransferase family. Short subfamily. Heteromultimer composed of HisG and HisZ subunits.

Its subcellular location is the cytoplasm. It catalyses the reaction 1-(5-phospho-beta-D-ribosyl)-ATP + diphosphate = 5-phospho-alpha-D-ribose 1-diphosphate + ATP. It functions in the pathway amino-acid biosynthesis; L-histidine biosynthesis; L-histidine from 5-phospho-alpha-D-ribose 1-diphosphate: step 1/9. In terms of biological role, catalyzes the condensation of ATP and 5-phosphoribose 1-diphosphate to form N'-(5'-phosphoribosyl)-ATP (PR-ATP). Has a crucial role in the pathway because the rate of histidine biosynthesis seems to be controlled primarily by regulation of HisG enzymatic activity. The chain is ATP phosphoribosyltransferase from Leptothrix cholodnii (strain ATCC 51168 / LMG 8142 / SP-6) (Leptothrix discophora (strain SP-6)).